We begin with the raw amino-acid sequence, 1441 residues long: Gag-Pol polyprotein (1441 aa).

Gly-2 carries the N-myristoyl glycine; by host lipid modification. Residues 16–22 (FEKIRLK) carry the Nuclear export signal motif. A Nuclear localization signal motif is present at residues 26-32 (KKCYRLK). A disordered region spans residues 204–226 (THPQQQPAQPGGGLRTPSGSDIA). CCHC-type zinc fingers lie at residues 386–403 (PICF…FFKA) and 407–424 (KGCW…QCPK). The segment covering 444-466 (TGELSGTRGDSNSSTIRGETSAE) has biased composition (polar residues). A disordered region spans residues 444 to 494 (TGELSGTRGDSNSSTIRGETSAENSEHLSEIRERAQAEDEGGEERGGFSFP). Basic and acidic residues predominate over residues 467–480 (NSEHLSEIRERAQA). The Peptidase A2 domain occupies 513–584 (IRALLDTGAD…TPIDIIGRNI (72 aa)). Catalysis depends on Asp-518, which acts as the For protease activity; shared with dimeric partner. Residues 640–830 (EGKISRVDPG…PPFHWMGYEL (191 aa)) form the Reverse transcriptase domain. Residues Asp-706, Asp-781, and Asp-782 each coordinate Mg(2+). The segment at 823–831 (FHWMGYELH) is RT 'primer grip'. Positions 994–1010 (WEDWWHEYWQCTWIPEV) match the Tryptophan repeat motif motif. One can recognise an RNase H type-1 domain in the interval 1030–1153 (LEGVETYYVD…IDKLVSSGIR (124 aa)). Residues Asp-1039, Glu-1074, Asp-1094, and Asp-1145 each coordinate Mg(2+). The Integrase-type zinc-finger motif lies at 1159 to 1200 (QNIEPAQEEHEKYHSNEAQLREKFHLPALVAKQIVQSCSKCC). Zn(2+) contacts are provided by His-1168, His-1172, Cys-1196, and Cys-1199. The Integrase catalytic domain occupies 1210-1360 (TDASLGVWQI…TAGERIVNMI (151 aa)). Residues Asp-1220 and Asp-1272 each contribute to the Mg(2+) site. The integrase-type DNA-binding region spans 1379–1426 (FKVYFREGRDQLWKGPGILLWKGEGAVVLKYQEEIKIVPRRKCKIIKD).

As to quaternary structure, homotrimer. Interacts with gp41 (via C-terminus). Homodimer. The active site consists of two apposed aspartic acid residues. In terms of assembly, heterodimer of p66 RT and p51 RT (RT p66/p51). Heterodimerization of RT is essential for DNA polymerase activity. Despite the sequence identities, p66 RT and p51 RT have distinct folding. As to quaternary structure, homotetramer; may further associate as a homohexadecamer. Mg(2+) is required as a cofactor. Post-translationally, specific enzymatic cleavages by the viral protease yield mature proteins. The protease is released by autocatalytic cleavage. The polyprotein is cleaved during and after budding, this process is termed maturation. Proteolytic cleavage of p66 RT removes the RNase H domain to yield the p51 RT subunit. Capsid protein p24 is phosphorylated.

It localises to the virion. The protein resides in the host nucleus. It is found in the host cytoplasm. The protein localises to the host cell membrane. The enzyme catalyses Specific for a P1 residue that is hydrophobic, and P1' variable, but often Pro.. The catalysed reaction is Endohydrolysis of RNA in RNA/DNA hybrids. Three different cleavage modes: 1. sequence-specific internal cleavage of RNA. Human immunodeficiency virus type 1 and Moloney murine leukemia virus enzymes prefer to cleave the RNA strand one nucleotide away from the RNA-DNA junction. 2. RNA 5'-end directed cleavage 13-19 nucleotides from the RNA end. 3. DNA 3'-end directed cleavage 15-20 nucleotides away from the primer terminus.. It catalyses the reaction 3'-end directed exonucleolytic cleavage of viral RNA-DNA hybrid.. It carries out the reaction DNA(n) + a 2'-deoxyribonucleoside 5'-triphosphate = DNA(n+1) + diphosphate. With respect to regulation, the viral protease is inhibited by many synthetic protease inhibitors (PIs), such as amprenavir, atazanavir, indinavir, loprinavir, nelfinavir, ritonavir and saquinavir. RT can be inhibited either by nucleoside RT inhibitors (NRTIs) or by non nucleoside RT inhibitors (NNRTIs). NRTIs act as chain terminators, whereas NNRTIs inhibit DNA polymerization by binding a small hydrophobic pocket near the RT active site and inducing an allosteric change in this region. Classical NRTIs are abacavir, adefovir (PMEA), didanosine (ddI), lamivudine (3TC), stavudine (d4T), tenofovir (PMPA), zalcitabine (ddC), and zidovudine (AZT). Classical NNRTIs are atevirdine (BHAP U-87201E), delavirdine, efavirenz (DMP-266), emivirine (I-EBU), and nevirapine (BI-RG-587). The tritherapies used as a basic effective treatment of AIDS associate two NRTIs and one NNRTI. Use of protease inhibitors in tritherapy regimens permit more ambitious therapeutic strategies. Gag-Pol polyprotein and Gag polyprotein may regulate their own translation, by the binding genomic RNA in the 5'-UTR. At low concentration, Gag-Pol and Gag would promote translation, whereas at high concentration, the polyproteins encapsidate genomic RNA and then shut off translation. Its function is as follows. Matrix protein p17 has two main functions: in infected cell, it targets Gag and Gag-pol polyproteins to the plasma membrane via a multipartite membrane-binding signal, that includes its myristointegration complex. The myristoylation signal and the NLS exert conflicting influences its subcellular localization. The key regulation of these motifs might be phosphorylation of a portion of MA molecules on the C-terminal tyrosine at the time of virus maturation, by virion-associated cellular tyrosine kinase. Implicated in the release from host cell mediated by Vpu. In terms of biological role, capsid protein p24 forms the conical core that encapsulates the genomic RNA-nucleocapsid complex in the virion. The core is constituted by capsid protein hexamer subunits. The core is disassembled soon after virion entry. Interaction with host PPIA/CYPA protects the virus from restriction by host TRIM5-alpha and from an unknown antiviral activity in host cells. This capsid restriction by TRIM5 is one of the factors which restricts SIV to the simian species. Functionally, nucleocapsid protein p7 encapsulates and protects viral dimeric unspliced (genomic) RNA. Binds these RNAs through its zinc fingers. Facilitates rearangement of nucleic acid secondary structure during retrotranscription of genomic RNA. This capability is referred to as nucleic acid chaperone activity. The aspartyl protease mediates proteolytic cleavages of Gag and Gag-Pol polyproteins during or shortly after the release of the virion from the plasma membrane. Cleavages take place as an ordered, step-wise cascade to yield mature proteins. This process is called maturation. Displays maximal activity during the budding process just prior to particle release from the cell. Also cleaves Nef and Vif, probably concomitantly with viral structural proteins on maturation of virus particles. Hydrolyzes host EIF4GI and PABP1 in order to shut off the capped cellular mRNA translation. The resulting inhibition of cellular protein synthesis serves to ensure maximal viral gene expression and to evade host immune response. Its function is as follows. Reverse transcriptase/ribonuclease H (RT) is a multifunctional enzyme that converts the viral dimeric RNA genome into dsDNA in the cytoplasm, shortly after virus entry into the cell. This enzyme displays a DNA polymerase activity that can copy either DNA or RNA templates, and a ribonuclease H (RNase H) activity that cleaves the RNA strand of RNA-DNA heteroduplexes in a partially processive 3' to 5' endonucleasic mode. Conversion of viral genomic RNA into dsDNA requires many steps. A tRNA binds to the primer-binding site (PBS) situated at the 5'-end of the viral RNA. RT uses the 3' end of the tRNA primer to perform a short round of RNA-dependent minus-strand DNA synthesis. The reading proceeds through the U5 region and ends after the repeated (R) region which is present at both ends of viral RNA. The portion of the RNA-DNA heteroduplex is digested by the RNase H, resulting in a ssDNA product attached to the tRNA primer. This ssDNA/tRNA hybridizes with the identical R region situated at the 3' end of viral RNA. This template exchange, known as minus-strand DNA strong stop transfer, can be either intra- or intermolecular. RT uses the 3' end of this newly synthesized short ssDNA to perform the RNA-dependent minus-strand DNA synthesis of the whole template. RNase H digests the RNA template except for two polypurine tracts (PPTs) situated at the 5'-end and near the center of the genome. It is not clear if both polymerase and RNase H activities are simultaneous. RNase H can probably proceed both in a polymerase-dependent (RNA cut into small fragments by the same RT performing DNA synthesis) and a polymerase-independent mode (cleavage of remaining RNA fragments by free RTs). Secondly, RT performs DNA-directed plus-strand DNA synthesis using the PPTs that have not been removed by RNase H as primers. PPTs and tRNA primers are then removed by RNase H. The 3' and 5' ssDNA PBS regions hybridize to form a circular dsDNA intermediate. Strand displacement synthesis by RT to the PBS and PPT ends produces a blunt ended, linear dsDNA copy of the viral genome that includes long terminal repeats (LTRs) at both ends. In terms of biological role, integrase catalyzes viral DNA integration into the host chromosome, by performing a series of DNA cutting and joining reactions. This enzyme activity takes place after virion entry into a cell and reverse transcription of the RNA genome in dsDNA. The first step in the integration process is 3' processing. This step requires a complex comprising the viral genome, matrix protein, Vpr and integrase. This complex is called the pre-integration complex (PIC). The integrase protein removes 2 nucleotides from each 3' end of the viral DNA, leaving recessed CA OH's at the 3' ends. In the second step, the PIC enters cell nucleus. This process is mediated through integrase and Vpr proteins, and allows the virus to infect a non dividing cell. This ability to enter the nucleus is specific of lentiviruses, other retroviruses cannot and rely on cell division to access cell chromosomes. In the third step, termed strand transfer, the integrase protein joins the previously processed 3' ends to the 5' ends of strands of target cellular DNA at the site of integration. The 5'-ends are produced by integrase-catalyzed staggered cuts, 5 bp apart. A Y-shaped, gapped, recombination intermediate results, with the 5'-ends of the viral DNA strands and the 3' ends of target DNA strands remaining unjoined, flanking a gap of 5 bp. The last step is viral DNA integration into host chromosome. This involves host DNA repair synthesis in which the 5 bp gaps between the unjoined strands are filled in and then ligated. Since this process occurs at both cuts flanking the SIV genome, a 5 bp duplication of host DNA is produced at the ends of SIV integration. Alternatively, Integrase may catalyze the excision of viral DNA just after strand transfer, this is termed disintegration. This Cercopithecidae (Old World monkeys) protein is Gag-Pol polyprotein (gag-pol).